The following is a 262-amino-acid chain: Encapsulin nanocompartment protein Rv1762c (262 aa).

Belongs to the UPF0145 family.

The protein resides in the encapsulin nanocompartment. Its function is as follows. Cargo protein of a type 1 encapsulin nanocompartment possibly involved in protection against oxidative stress. The chain is Encapsulin nanocompartment protein Rv1762c from Mycobacterium tuberculosis (strain ATCC 25618 / H37Rv).